The sequence spans 252 residues: UPF0246 protein Fjoh_4905 (252 aa).

Belongs to the UPF0246 family.

This chain is UPF0246 protein Fjoh_4905, found in Flavobacterium johnsoniae (strain ATCC 17061 / DSM 2064 / JCM 8514 / BCRC 14874 / CCUG 350202 / NBRC 14942 / NCIMB 11054 / UW101) (Cytophaga johnsonae).